The primary structure comprises 391 residues: Formate-dependent phosphoribosylglycinamide formyltransferase (391 aa).

Residues 20 to 21 and E80 each bind N(1)-(5-phospho-beta-D-ribosyl)glycinamide; that span reads EL. Residues R112, K153, 158–163, 193–196, and E201 each bind ATP; these read SSGKGQ and EGFI. In terms of domain architecture, ATP-grasp spans 117–306; that stretch reads RLAAETLGLP…EFALHVRAIL (190 aa). Residues E265 and E277 each contribute to the Mg(2+) site. Residues D284, K354, and 361-362 each bind N(1)-(5-phospho-beta-D-ribosyl)glycinamide; that span reads RR.

This sequence belongs to the PurK/PurT family. Homodimer.

The catalysed reaction is N(1)-(5-phospho-beta-D-ribosyl)glycinamide + formate + ATP = N(2)-formyl-N(1)-(5-phospho-beta-D-ribosyl)glycinamide + ADP + phosphate + H(+). The protein operates within purine metabolism; IMP biosynthesis via de novo pathway; N(2)-formyl-N(1)-(5-phospho-D-ribosyl)glycinamide from N(1)-(5-phospho-D-ribosyl)glycinamide (formate route): step 1/1. In terms of biological role, involved in the de novo purine biosynthesis. Catalyzes the transfer of formate to 5-phospho-ribosyl-glycinamide (GAR), producing 5-phospho-ribosyl-N-formylglycinamide (FGAR). Formate is provided by PurU via hydrolysis of 10-formyl-tetrahydrofolate. This Shewanella oneidensis (strain ATCC 700550 / JCM 31522 / CIP 106686 / LMG 19005 / NCIMB 14063 / MR-1) protein is Formate-dependent phosphoribosylglycinamide formyltransferase.